Reading from the N-terminus, the 216-residue chain is 3-isopropylmalate dehydratase small subunit (216 aa).

This sequence belongs to the LeuD family. LeuD type 1 subfamily. In terms of assembly, heterodimer of LeuC and LeuD.

It carries out the reaction (2R,3S)-3-isopropylmalate = (2S)-2-isopropylmalate. It participates in amino-acid biosynthesis; L-leucine biosynthesis; L-leucine from 3-methyl-2-oxobutanoate: step 2/4. Functionally, catalyzes the isomerization between 2-isopropylmalate and 3-isopropylmalate, via the formation of 2-isopropylmaleate. The polypeptide is 3-isopropylmalate dehydratase small subunit (Ralstonia nicotianae (strain ATCC BAA-1114 / GMI1000) (Ralstonia solanacearum)).